We begin with the raw amino-acid sequence, 466 residues long: tRNA modification GTPase MnmE (466 aa).

(6S)-5-formyl-5,6,7,8-tetrahydrofolate contacts are provided by arginine 23, glutamate 86, and lysine 125. Positions 221 to 388 constitute a TrmE-type G domain; the sequence is GIPVAIVGEP…LKNELLSFVN (168 aa). Asparagine 231 provides a ligand contact to K(+). Residues 231–236, 250–256, and 275–278 contribute to the GTP site; these read NVGKST, SDIAGTT, and DTAG. A Mg(2+)-binding site is contributed by serine 235. Residues serine 250, isoleucine 252, and threonine 255 each coordinate K(+). Residue threonine 256 coordinates Mg(2+). Residue lysine 466 coordinates (6S)-5-formyl-5,6,7,8-tetrahydrofolate.

The protein belongs to the TRAFAC class TrmE-Era-EngA-EngB-Septin-like GTPase superfamily. TrmE GTPase family. In terms of assembly, homodimer. Heterotetramer of two MnmE and two MnmG subunits. K(+) serves as cofactor.

Its subcellular location is the cytoplasm. Its function is as follows. Exhibits a very high intrinsic GTPase hydrolysis rate. Involved in the addition of a carboxymethylaminomethyl (cmnm) group at the wobble position (U34) of certain tRNAs, forming tRNA-cmnm(5)s(2)U34. The polypeptide is tRNA modification GTPase MnmE (Flavobacterium johnsoniae (strain ATCC 17061 / DSM 2064 / JCM 8514 / BCRC 14874 / CCUG 350202 / NBRC 14942 / NCIMB 11054 / UW101) (Cytophaga johnsonae)).